The primary structure comprises 654 residues: Protein fem-1 homolog A-A (654 aa).

7 ANK repeats span residues D2–L31, G40–A70, E82–R111, T115–V145, H149–R178, K182–R211, and Y214–Q243. S108 is modified (phosphoserine). The disordered stretch occupies residues E242 to P265. The span at G253–S263 shows a compositional bias: polar residues. TPR repeat units lie at residues V283–G317 and S375–N408. 2 ANK repeats span residues N519–S561 and D565–A594. S608 is modified (phosphoserine).

The protein belongs to the fem-1 family. Component of a CRL2 E3 ubiquitin-protein ligase complex, also named ECS (Elongin BC-CUL2/5-SOCS-box protein) complex, composed of CUL2, Elongin BC (ELOB and ELOC), RBX1 and substrate-specific adapter FEM1A. Interacts with PTGER4. Interacts with NFKB1; the interaction is direct. Post-translationally, phosphorylated; highly phosphorylated in myoblasts and myotubes. Phosphorylation at Ser-108 and Ser-608 promote PGE2-EP4-mediated inhibition of inflammation. Dephosphorylated by protein phosphatase 2A (PP2A). As to expression, preferentially expressed in cardiac muscle, brain and liver (at protein level). Also expressed in skeletal muscle.

The protein localises to the mitochondrion. It localises to the cytoplasm. The protein operates within protein modification; protein ubiquitination. Functionally, substrate-recognition component of a Cul2-RING (CRL2) E3 ubiquitin-protein ligase complex of the DesCEND (destruction via C-end degrons) pathway, which recognizes a C-degron located at the extreme C terminus of target proteins, leading to their ubiquitination and degradation. The C-degron recognized by the DesCEND pathway is usually a motif of less than ten residues and can be present in full-length proteins, truncated proteins or proteolytically cleaved forms. The CRL2(FEM1A) complex specifically recognizes proteins with an arginine at the C-terminus: recognizes and binds proteins ending with -Lys/Arg-Xaa-Arg and -Lys/Arg-Xaa-Xaa-Arg C-degrons, such as SIL1 or OR51B2, leading to their ubiquitination and degradation. Involved in PGE2-EP4-mediated inhibition of inflammation of macrophages via interaction with NFKB1 and PTGER4. Promotes inflammation in brain microglia through MAP2K4/MKK4-mediated signaling. In Mus musculus (Mouse), this protein is Protein fem-1 homolog A-A.